The sequence spans 292 residues: MQFTGAFTAIVTPFRNGRVDEERFRELIEWQIEQGINGLVPCGTTGESATLSHDEHRDVIRICVEQVKGRIPVLAGAGSNNTREAIDLTRFAKEAGADGALLITPYYNKPTQEGLYLHFKAIASEVSMPFIVYNVPSRTGTNICPETLARLNRDIPEVVGVKEATGNLIQVSEILEYCGTDFQVLSGDDFTVLPLLSVGGCGVISVTSNVVPAKMSDMCRAFKAGDLATARRLHFELSPINRAMFLETNPIPVKTALALMGRIDLEMRLPLCPLQQVNQSRLRDILAAAGIL.

Thr-45 is a binding site for pyruvate. Tyr-133 serves as the catalytic Proton donor/acceptor. The active-site Schiff-base intermediate with substrate is Lys-162. Pyruvate is bound at residue Ile-204.

It belongs to the DapA family. Homotetramer; dimer of dimers.

It localises to the cytoplasm. The catalysed reaction is L-aspartate 4-semialdehyde + pyruvate = (2S,4S)-4-hydroxy-2,3,4,5-tetrahydrodipicolinate + H2O + H(+). It functions in the pathway amino-acid biosynthesis; L-lysine biosynthesis via DAP pathway; (S)-tetrahydrodipicolinate from L-aspartate: step 3/4. Functionally, catalyzes the condensation of (S)-aspartate-beta-semialdehyde [(S)-ASA] and pyruvate to 4-hydroxy-tetrahydrodipicolinate (HTPA). The chain is 4-hydroxy-tetrahydrodipicolinate synthase from Nitratidesulfovibrio vulgaris (strain ATCC 29579 / DSM 644 / CCUG 34227 / NCIMB 8303 / VKM B-1760 / Hildenborough) (Desulfovibrio vulgaris).